The following is a 217-amino-acid chain: MITLALSKGRIFDDILPLLRTAGIEVLDDPEKSRKLILGTNQPDLRVVLVRATDVPTYVQYGGADIGVVGKDTLLESGSQGLYQPLDLQIAKCRISVAVRQGFDYAAAVKQGSRLKVATKYVAISRDFFATKGVHVDLIKLYGSMELAPLTGLADAIVDLVSTGSTLKANHLIEVERIMDISSHLVVNQTALKLKQAPIRKLIDAFSLACAQAAAKQ.

The protein belongs to the ATP phosphoribosyltransferase family. Short subfamily. In terms of assembly, heteromultimer composed of HisG and HisZ subunits.

The protein resides in the cytoplasm. The catalysed reaction is 1-(5-phospho-beta-D-ribosyl)-ATP + diphosphate = 5-phospho-alpha-D-ribose 1-diphosphate + ATP. It functions in the pathway amino-acid biosynthesis; L-histidine biosynthesis; L-histidine from 5-phospho-alpha-D-ribose 1-diphosphate: step 1/9. Its function is as follows. Catalyzes the condensation of ATP and 5-phosphoribose 1-diphosphate to form N'-(5'-phosphoribosyl)-ATP (PR-ATP). Has a crucial role in the pathway because the rate of histidine biosynthesis seems to be controlled primarily by regulation of HisG enzymatic activity. In Polaromonas naphthalenivorans (strain CJ2), this protein is ATP phosphoribosyltransferase.